The primary structure comprises 368 residues: Peptide chain release factor 2 (368 aa).

Glutamine 249 is subject to N5-methylglutamine.

The protein belongs to the prokaryotic/mitochondrial release factor family. Post-translationally, methylated by PrmC. Methylation increases the termination efficiency of RF2.

Its subcellular location is the cytoplasm. Peptide chain release factor 2 directs the termination of translation in response to the peptide chain termination codons UGA and UAA. This Rhodococcus erythropolis (strain PR4 / NBRC 100887) protein is Peptide chain release factor 2.